Here is a 145-residue protein sequence, read N- to C-terminus: Dihydrolipoyllysine-residue succinyltransferase component of 2-oxoglutarate dehydrogenase complex, mitochondrial (145 aa).

The 28-residue stretch at 4–31 (ITVQTPAFAESVTEGDVRVEGGTPLFTL) folds into the Lipoyl-binding domain. Serine 14 is modified (phosphoserine). N6-acetyllysine occurs at positions 36 and 66. Residues histidine 119 and aspartate 123 contribute to the active site.

Belongs to the 2-oxoacid dehydrogenase family. As to quaternary structure, the 2-oxoglutarate dehydrogenase complex is composed of OGDH (2-oxoglutarate dehydrogenase; E1), DLST (dihydrolipoamide succinyltransferase; E2), DLD (dihydrolipoamide dehydrogenase; E3) and the assembly factor KGD4. It contains multiple copies of the three enzymatic components (E1, E2 and E3). In the nucleus, the 2-oxoglutarate dehydrogenase complex associates with KAT2A. Interacts with ABHD11; this interaction maintains the functional lipoylation of the 2-oxoglutarate dehydrogenase complex. It depends on (R)-lipoate as a cofactor.

The protein localises to the mitochondrion matrix. It localises to the nucleus. The enzyme catalyses N(6)-[(R)-dihydrolipoyl]-L-lysyl-[protein] + succinyl-CoA = N(6)-[(R)-S(8)-succinyldihydrolipoyl]-L-lysyl-[protein] + CoA. It functions in the pathway amino-acid degradation; L-lysine degradation via saccharopine pathway; glutaryl-CoA from L-lysine: step 6/6. The protein operates within carbohydrate metabolism; tricarboxylic acid cycle. Its function is as follows. Dihydrolipoamide succinyltransferase (E2) component of the 2-oxoglutarate dehydrogenase complex. The 2-oxoglutarate dehydrogenase complex catalyzes the overall conversion of 2-oxoglutarate to succinyl-CoA and CO(2). The 2-oxoglutarate dehydrogenase complex is mainly active in the mitochondrion. A fraction of the 2-oxoglutarate dehydrogenase complex also localizes in the nucleus and is required for lysine succinylation of histones: associates with KAT2A on chromatin and provides succinyl-CoA to histone succinyltransferase KAT2A. The chain is Dihydrolipoyllysine-residue succinyltransferase component of 2-oxoglutarate dehydrogenase complex, mitochondrial from Mesocricetus auratus (Golden hamster).